Reading from the N-terminus, the 146-residue chain is MNINATDNSLSTPLHHAINLLKTDIVSLLMQYKADASIRDSKGITPFCYAMYLGYYGVNKDILNIITRYNSINGTTRDINDVYTILLNNKKKNYVFVNLHDAARLGYVYILKKIIYNGKNINRIDEYYYSALHYAVKSSNLKAVNF.

4 ANK repeats span residues serine 9–isoleucine 38, lysine 42–isoleucine 79, tyrosine 94–glutamate 126, and tyrosine 127–asparagine 145.

The chain is Putative ankyrin repeat protein FPV224 from Fowlpox virus (strain NVSL) (FPV).